The sequence spans 353 residues: tRNA-specific 2-thiouridylase MnmA 2 (353 aa).

ATP is bound by residues 9 to 16 (AMSGGVDS) and M35. The active-site Nucleophile is C98. Cysteines 98 and 194 form a disulfide. G122 lines the ATP pocket. The segment at 144 to 146 (KDQ) is interaction with tRNA. C194 (cysteine persulfide intermediate) is an active-site residue. The interval 300–301 (RY) is interaction with tRNA.

This sequence belongs to the MnmA/TRMU family.

The protein localises to the cytoplasm. It catalyses the reaction S-sulfanyl-L-cysteinyl-[protein] + uridine(34) in tRNA + AH2 + ATP = 2-thiouridine(34) in tRNA + L-cysteinyl-[protein] + A + AMP + diphosphate + H(+). Catalyzes the 2-thiolation of uridine at the wobble position (U34) of tRNA, leading to the formation of s(2)U34. The sequence is that of tRNA-specific 2-thiouridylase MnmA 2 from Clostridium botulinum (strain Loch Maree / Type A3).